A 458-amino-acid polypeptide reads, in one-letter code: Tetracycline resistance protein (458 aa).

A run of 12 helical transmembrane segments spans residues 12 to 33, 81 to 100, 111 to 129, 140 to 162, 165 to 185, 201 to 221, 223 to 240, 256 to 276, 297 to 317, 324 to 344, 346 to 365, and 432 to 451; these read HNQVLIWLCVLSFFSVLNEMVL, LLLFGIMVNGLGSIIGFVGH, FIQGIGAAAFPALVMVVVA, AFGLIGSLVAMGEGVGPAIGGMV, YIHWSYLLLIPTATIITVPFL, MAGIILMSAGIVFFMLFTTSY, FSFLIISILAFFIFVQHI, VFFVIGTLCGGLIFGTVAGFV, GIIFPGTMSVIIFGYIGGLLV, YVLTIGSALLSSGFLIAAFFI, AAPWIMTIIVIFVFGGLSFT, and MLILFAGIIVICWLVILNVY.

The protein belongs to the major facilitator superfamily. TCR/Tet family.

Its subcellular location is the cell membrane. Functionally, resistance to tetracycline by an active tetracycline efflux. This is an energy-dependent process that decreases the accumulation of the antibiotic in whole cells. This protein functions as a metal-tetracycline/H(+) antiporter. The protein is Tetracycline resistance protein (tetB) of Bacillus subtilis (strain 168).